A 455-amino-acid chain; its full sequence is Tubulin delta chain (455 aa).

143 to 149 (AGGTGSG) provides a ligand contact to GTP.

Belongs to the tubulin family. Found in a complex with TEDC1, TEDC2, TUBE1 and TUBD1. Highly expressed in testis.

The protein localises to the cell projection. The protein resides in the cilium. It is found in the cytoplasm. Its subcellular location is the cytoskeleton. It localises to the microtubule organizing center. The protein localises to the centrosome. The protein resides in the centriole. It is found in the nucleus. In terms of biological role, acts as a positive regulator of hedgehog signaling and regulates ciliary function. The protein is Tubulin delta chain (Tubd1) of Mus musculus (Mouse).